Here is a 593-residue protein sequence, read N- to C-terminus: Translocon at the outer membrane of chloroplasts 64 (593 aa).

Over 1-4 (MKSM) the chain is Chloroplast intermembrane. Residues 5 to 25 (ASPSSQIWVILGLGLAGIYVL) traverse the membrane as a helical segment. Residues 26–144 (TRKLTQAVKE…NPAVPNRVPG (119 aa)) lie on the Cytoplasmic side of the membrane. The helical transmembrane segment at 145–165 (GSSSGAAVAVAANFVDFSLGV) threads the bilayer. Over 166–403 (DTSGGVRVPA…LSHDYQSRAL (238 aa)) the chain is Chloroplast intermembrane. The chain crosses the membrane as a helical span at residues 404 to 424 (SLLSIASISGCCQVTVPLGFF). Topologically, residues 425–593 (DKNPVSVSLI…SAERLRKLFQ (169 aa)) are cytoplasmic. TPR repeat units lie at residues 477–510 (AEIS…CGNN), 511–544 (ATYY…DKKN), and 545–578 (VKAY…EPTN).

As to quaternary structure, part of the Toc complex and of the intermembrane space complex. Interacts with TOC12, TIC22 and with the cytosolic domain of TOC34 in a GTP dependent manner. Interacts (via TPR region) with HSP90 and with HSP70 with low efficiency.

It localises to the plastid. The protein localises to the chloroplast outer membrane. In terms of biological role, chaperone receptor mediating Hsp90-dependent protein targeting to chloroplasts. Bi-functional preprotein receptor acting on both sides of the membrane. In Pisum sativum (Garden pea), this protein is Translocon at the outer membrane of chloroplasts 64 (TOC64).